The chain runs to 431 residues: Trigger factor (431 aa).

The 85-residue stretch at 161 to 245 (TDIVIGDVQK…VKEIKRMELP (85 aa)) folds into the PPIase FKBP-type domain.

The protein belongs to the FKBP-type PPIase family. Tig subfamily.

Its subcellular location is the cytoplasm. The enzyme catalyses [protein]-peptidylproline (omega=180) = [protein]-peptidylproline (omega=0). In terms of biological role, involved in protein export. Acts as a chaperone by maintaining the newly synthesized protein in an open conformation. Functions as a peptidyl-prolyl cis-trans isomerase. This chain is Trigger factor, found in Chloroherpeton thalassium (strain ATCC 35110 / GB-78).